A 631-amino-acid polypeptide reads, in one-letter code: 1-deoxy-D-xylulose-5-phosphate synthase (631 aa).

Thiamine diphosphate is bound by residues His87 and 128 to 130; that span reads GHS. Asp159 is a Mg(2+) binding site. Thiamine diphosphate is bound by residues 160–161, Asn188, Phe295, and Glu377; that span reads GA. Asn188 is a binding site for Mg(2+).

The protein belongs to the transketolase family. DXPS subfamily. In terms of assembly, homodimer. Requires Mg(2+) as cofactor. Thiamine diphosphate serves as cofactor.

It carries out the reaction D-glyceraldehyde 3-phosphate + pyruvate + H(+) = 1-deoxy-D-xylulose 5-phosphate + CO2. The protein operates within metabolic intermediate biosynthesis; 1-deoxy-D-xylulose 5-phosphate biosynthesis; 1-deoxy-D-xylulose 5-phosphate from D-glyceraldehyde 3-phosphate and pyruvate: step 1/1. Its function is as follows. Catalyzes the acyloin condensation reaction between C atoms 2 and 3 of pyruvate and glyceraldehyde 3-phosphate to yield 1-deoxy-D-xylulose-5-phosphate (DXP). This chain is 1-deoxy-D-xylulose-5-phosphate synthase, found in Pseudomonas putida (strain GB-1).